The following is a 225-amino-acid chain: tRNA (guanine-N(1)-)-methyltransferase (225 aa).

S-adenosyl-L-methionine contacts are provided by residues Gly-112 and 132-137 (IGDYVL).

It belongs to the RNA methyltransferase TrmD family. As to quaternary structure, homodimer.

It is found in the cytoplasm. It catalyses the reaction guanosine(37) in tRNA + S-adenosyl-L-methionine = N(1)-methylguanosine(37) in tRNA + S-adenosyl-L-homocysteine + H(+). Its function is as follows. Specifically methylates guanosine-37 in various tRNAs. This chain is tRNA (guanine-N(1)-)-methyltransferase, found in Porphyromonas gingivalis (strain ATCC BAA-308 / W83).